The chain runs to 107 residues: UPF0145 protein CHY_0465 (107 aa).

The protein belongs to the UPF0145 family.

This Carboxydothermus hydrogenoformans (strain ATCC BAA-161 / DSM 6008 / Z-2901) protein is UPF0145 protein CHY_0465.